Reading from the N-terminus, the 322-residue chain is Methionyl-tRNA formyltransferase (322 aa).

Residue 113 to 116 (SLLP) participates in (6S)-5,6,7,8-tetrahydrofolate binding.

Belongs to the Fmt family.

The enzyme catalyses L-methionyl-tRNA(fMet) + (6R)-10-formyltetrahydrofolate = N-formyl-L-methionyl-tRNA(fMet) + (6S)-5,6,7,8-tetrahydrofolate + H(+). Functionally, attaches a formyl group to the free amino group of methionyl-tRNA(fMet). The formyl group appears to play a dual role in the initiator identity of N-formylmethionyl-tRNA by promoting its recognition by IF2 and preventing the misappropriation of this tRNA by the elongation apparatus. The protein is Methionyl-tRNA formyltransferase of Bacteroides thetaiotaomicron (strain ATCC 29148 / DSM 2079 / JCM 5827 / CCUG 10774 / NCTC 10582 / VPI-5482 / E50).